Here is a 371-residue protein sequence, read N- to C-terminus: Vasculin (371 aa).

This sequence belongs to the vasculin family.

It is found in the nucleus. Its function is as follows. Functions as a GC-rich promoter-specific transactivating transcription factor. This chain is Vasculin (gpbp1), found in Xenopus laevis (African clawed frog).